We begin with the raw amino-acid sequence, 513 residues long: GMP synthase [glutamine-hydrolyzing] (513 aa).

A Glutamine amidotransferase type-1 domain is found at Thr3–Asn192. Cys80 acts as the Nucleophile in catalysis. Active-site residues include His166 and Glu168. Residues Trp193–Arg388 enclose the GMPS ATP-PPase domain. Residue Ser220–Ser226 participates in ATP binding.

As to quaternary structure, homodimer.

It carries out the reaction XMP + L-glutamine + ATP + H2O = GMP + L-glutamate + AMP + diphosphate + 2 H(+). The protein operates within purine metabolism; GMP biosynthesis; GMP from XMP (L-Gln route): step 1/1. Catalyzes the synthesis of GMP from XMP. The polypeptide is GMP synthase [glutamine-hydrolyzing] (Thermosipho melanesiensis (strain DSM 12029 / CIP 104789 / BI429)).